The following is a 294-amino-acid chain: Octopine-binding periplasmic protein (294 aa).

The signal sequence occupies residues 1 to 20 (MRLKSIMCAALFVVAGQAAA). Cysteines 57 and 64 form a disulfide.

It belongs to the bacterial solute-binding protein 3 family.

The protein resides in the periplasm. In terms of biological role, component of the octopine active transport system probably consisting of four subunits: Q, M, P and T. This is Octopine-binding periplasmic protein (occT) from Rhizobium meliloti (Ensifer meliloti).